We begin with the raw amino-acid sequence, 256 residues long: Rhamnolipids biosynthesis 3-oxoacyl-[acyl-carrier-protein] reductase (256 aa).

14-38 contacts NADP(+); the sequence is VTGGSRGIGQMIAQGLLEAGARVFI. Residue Ser148 coordinates substrate. The active-site Proton acceptor is the Tyr162.

The protein belongs to the short-chain dehydrogenases/reductases (SDR) family.

It carries out the reaction a (3R)-hydroxyacyl-[ACP] + NADP(+) = a 3-oxoacyl-[ACP] + NADPH + H(+). It functions in the pathway lipid metabolism; rhamnolipid biosynthesis. Its function is as follows. Required for the synthesis of the beta-hydroxy acid moiety of rhamnolipids. The chain is Rhamnolipids biosynthesis 3-oxoacyl-[acyl-carrier-protein] reductase (rhlG) from Pseudomonas aeruginosa (strain ATCC 15692 / DSM 22644 / CIP 104116 / JCM 14847 / LMG 12228 / 1C / PRS 101 / PAO1).